Here is a 209-residue protein sequence, read N- to C-terminus: dITP/XTP pyrophosphatase (209 aa).

Residue 22-27 (SHNQGK) coordinates substrate. Residue Asp83 is the Proton acceptor of the active site. Residue Asp83 participates in Mg(2+) binding. Residues Ser84, 167–170 (FGYD), Lys190, and 195–196 (HR) each bind substrate.

It belongs to the HAM1 NTPase family. Homodimer. Mg(2+) serves as cofactor.

The catalysed reaction is XTP + H2O = XMP + diphosphate + H(+). It catalyses the reaction dITP + H2O = dIMP + diphosphate + H(+). The enzyme catalyses ITP + H2O = IMP + diphosphate + H(+). Its function is as follows. Pyrophosphatase that catalyzes the hydrolysis of nucleoside triphosphates to their monophosphate derivatives, with a high preference for the non-canonical purine nucleotides XTP (xanthosine triphosphate), dITP (deoxyinosine triphosphate) and ITP. Seems to function as a house-cleaning enzyme that removes non-canonical purine nucleotides from the nucleotide pool, thus preventing their incorporation into DNA/RNA and avoiding chromosomal lesions. This is dITP/XTP pyrophosphatase from Zymomonas mobilis subsp. mobilis (strain ATCC 31821 / ZM4 / CP4).